The chain runs to 55 residues: MIEMARYQCMCGWVYDEDKGEPSQNIPPGTKFEDLPDTFRCPQCGLGKNAFRKID.

The 51-residue stretch at 4–54 folds into the Rubredoxin-like domain; the sequence is MARYQCMCGWVYDEDKGEPSQNIPPGTKFEDLPDTFRCPQCGLGKNAFRKI. Positions 9, 11, 41, and 44 each coordinate Fe cation.

It belongs to the rubredoxin family. Requires Fe(3+) as cofactor.

In terms of biological role, rubredoxin is a small nonheme, iron protein lacking acid-labile sulfide. Its single Fe, chelated to 4 Cys, functions as an electron acceptor and may also stabilize the conformation of the molecule. The chain is Probable Rubredoxin-2 from Methanocaldococcus jannaschii (strain ATCC 43067 / DSM 2661 / JAL-1 / JCM 10045 / NBRC 100440) (Methanococcus jannaschii).